Reading from the N-terminus, the 195-residue chain is Imidazoleglycerol-phosphate dehydratase (195 aa).

This sequence belongs to the imidazoleglycerol-phosphate dehydratase family.

It localises to the cytoplasm. The catalysed reaction is D-erythro-1-(imidazol-4-yl)glycerol 3-phosphate = 3-(imidazol-4-yl)-2-oxopropyl phosphate + H2O. It functions in the pathway amino-acid biosynthesis; L-histidine biosynthesis; L-histidine from 5-phospho-alpha-D-ribose 1-diphosphate: step 6/9. The polypeptide is Imidazoleglycerol-phosphate dehydratase (Acetivibrio thermocellus (strain ATCC 27405 / DSM 1237 / JCM 9322 / NBRC 103400 / NCIMB 10682 / NRRL B-4536 / VPI 7372) (Clostridium thermocellum)).